Reading from the N-terminus, the 150-residue chain is Large ribosomal subunit protein bL9 (150 aa).

The protein belongs to the bacterial ribosomal protein bL9 family.

Binds to the 23S rRNA. The polypeptide is Large ribosomal subunit protein bL9 (Neisseria meningitidis serogroup C (strain 053442)).